Consider the following 681-residue polypeptide: DNA ligase (681 aa).

NAD(+)-binding positions include 45–49 (DFDFD), 94–95 (SL), and E120. K122 serves as the catalytic N6-AMP-lysine intermediate. R143, E177, K289, and K313 together coordinate NAD(+). C403, C406, C421, and C426 together coordinate Zn(2+). The BRCT domain occupies 593–681 (SDQQPFAGQS…SLKINFKNTI (89 aa)).

The protein belongs to the NAD-dependent DNA ligase family. LigA subfamily. The cofactor is Mg(2+). It depends on Mn(2+) as a cofactor.

The catalysed reaction is NAD(+) + (deoxyribonucleotide)n-3'-hydroxyl + 5'-phospho-(deoxyribonucleotide)m = (deoxyribonucleotide)n+m + AMP + beta-nicotinamide D-nucleotide.. In terms of biological role, DNA ligase that catalyzes the formation of phosphodiester linkages between 5'-phosphoryl and 3'-hydroxyl groups in double-stranded DNA using NAD as a coenzyme and as the energy source for the reaction. It is essential for DNA replication and repair of damaged DNA. This is DNA ligase from Leptospira borgpetersenii serovar Hardjo-bovis (strain L550).